Consider the following 186-residue polypeptide: Acetyltransferase PA5475 (186 aa).

One can recognise an N-acetyltransferase domain in the interval 31–186 (VLIRPLREED…STQVIHRLAL (156 aa)). CoA is bound by residues 117–119 (VTI), G125, N156, and 161–163 (DLC).

Catalyzes the transfer of an acetyl group from acetyl coenzyme A (AcCoA) to an acceptor substrate and releases both CoA and the acetylated product. It prefers the antibiotic chloramphenicol. This is Acetyltransferase PA5475 from Pseudomonas aeruginosa (strain ATCC 15692 / DSM 22644 / CIP 104116 / JCM 14847 / LMG 12228 / 1C / PRS 101 / PAO1).